A 179-amino-acid polypeptide reads, in one-letter code: Large ribosomal subunit protein uL5 (179 aa).

The protein belongs to the universal ribosomal protein uL5 family. In terms of assembly, part of the 50S ribosomal subunit; part of the 5S rRNA/L5/L18/L25 subcomplex. Contacts the 5S rRNA and the P site tRNA. Forms a bridge to the 30S subunit in the 70S ribosome.

Its function is as follows. This is one of the proteins that bind and probably mediate the attachment of the 5S RNA into the large ribosomal subunit, where it forms part of the central protuberance. In the 70S ribosome it contacts protein S13 of the 30S subunit (bridge B1b), connecting the 2 subunits; this bridge is implicated in subunit movement. Contacts the P site tRNA; the 5S rRNA and some of its associated proteins might help stabilize positioning of ribosome-bound tRNAs. This chain is Large ribosomal subunit protein uL5, found in Haemophilus influenzae (strain 86-028NP).